We begin with the raw amino-acid sequence, 92 residues long: MVRSVWKGPFVEASLLKKADAARASGRHDVIKIWSRRSTILPQFVGLTFGVYNGQKHVPVSVNEEMVGHKFGEFSPTRTFHGHAGDKKSKKG.

Its function is as follows. Protein S19 forms a complex with S13 that binds strongly to the 16S ribosomal RNA. In Rhodopseudomonas palustris (strain ATCC BAA-98 / CGA009), this protein is Small ribosomal subunit protein uS19.